A 334-amino-acid chain; its full sequence is Tryptophan--tRNA ligase (334 aa).

Residues 11–13 (QPS) and 19–20 (GN) contribute to the ATP site. The short motif at 12–20 (PSGELTIGN) is the 'HIGH' region element. Asp-135 contributes to the L-tryptophan binding site. ATP contacts are provided by residues 147 to 149 (GED), Val-186, and 195 to 199 (KMSKS). The 'KMSKS' region signature appears at 195 to 199 (KMSKS).

This sequence belongs to the class-I aminoacyl-tRNA synthetase family. As to quaternary structure, homodimer.

Its subcellular location is the cytoplasm. It carries out the reaction tRNA(Trp) + L-tryptophan + ATP = L-tryptophyl-tRNA(Trp) + AMP + diphosphate + H(+). Functionally, catalyzes the attachment of tryptophan to tRNA(Trp). This chain is Tryptophan--tRNA ligase, found in Escherichia coli O157:H7.